A 393-amino-acid polypeptide reads, in one-letter code: Acetate kinase (393 aa).

Asparagine 10 provides a ligand contact to Mg(2+). Lysine 17 contacts ATP. Residue arginine 89 coordinates substrate. Aspartate 146 serves as the catalytic Proton donor/acceptor. Residues 204-208, 278-280, and 323-327 contribute to the ATP site; these read HLGNG, DMR, and GVGEN. Residue glutamate 376 coordinates Mg(2+).

The protein belongs to the acetokinase family. In terms of assembly, homodimer. Mg(2+) serves as cofactor. Mn(2+) is required as a cofactor.

The protein localises to the cytoplasm. The catalysed reaction is acetate + ATP = acetyl phosphate + ADP. It participates in metabolic intermediate biosynthesis; acetyl-CoA biosynthesis; acetyl-CoA from acetate: step 1/2. Its function is as follows. Catalyzes the formation of acetyl phosphate from acetate and ATP. Can also catalyze the reverse reaction. The sequence is that of Acetate kinase from Mycoplasma genitalium (strain ATCC 33530 / DSM 19775 / NCTC 10195 / G37) (Mycoplasmoides genitalium).